The primary structure comprises 527 residues: Acid-sensing ion channel 1 (527 aa).

Over 1-49 (MMDLKVDEEEVDSGQPVSIQAFASSSTLHGISHIFSYERLSLKRVVWAL) the chain is Cytoplasmic. Residues 50 to 71 (CFMGSLALLALVCTNRIQYYFL) traverse the membrane as a helical segment. The Extracellular portion of the chain corresponds to 72–424 (YPHVTKLDEV…NYETIEQKKA (353 aa)). Disulfide bonds link Cys94-Cys195, Cys173-Cys180, Cys291-Cys366, Cys309-Cys362, Cys313-Cys360, Cys322-Cys344, and Cys324-Cys336. N-linked (GlcNAc...) asparagine glycans are attached at residues Asn367 and Asn394. Residues 425-454 (YEVAGLLGDIGGQMGLFIGASILTVLELFD) traverse the membrane as a discontinuously helical segment. The short motif at 443-445 (GAS) is the GAS motif; ion selectivity filter element. Residues 455-527 (YAYEVIKHRL…ARGTFEDFTC (73 aa)) lie on the Cytoplasmic side of the membrane.

The protein belongs to the amiloride-sensitive sodium channel (TC 1.A.6) family. ASIC1 subfamily. Homotrimer. Heterotrimer; with other ASIC proteins producing channel with different properties.

It localises to the cell membrane. It is found in the postsynaptic cell membrane. Its subcellular location is the cell projection. The protein localises to the dendrite. The catalysed reaction is Na(+)(in) = Na(+)(out). It carries out the reaction Li(+)(in) = Li(+)(out). It catalyses the reaction K(+)(in) = K(+)(out). The enzyme catalyses Ca(2+)(in) = Ca(2+)(out). Its activity is regulated as follows. Inhibited by the diuretic drug amiloride. Inhibited by Cs(1+) ions. Inhibited by the spider venom psalmotoxin-1; this locks the channel into its desensitized conformation. Channel activity is increased by the heterodimeric snake venom neurotoxin composed of MitTx-alpha and MitTx-beta; this slows channel closure and increases the magnitude of the steady-state current that is triggered by low pH. Its function is as follows. Forms voltage-independent, pH-gated trimeric sodium channels that act as postsynaptic excitatory receptors in the nervous system, playing a crucial role in regulating synaptic plasticity, learning, and memory. Upon extracellular pH drop this channel elicits transient, fast activating, and completely desensitizing inward currents. Displays high selectivity for sodium ions but can also permit the permeation of other cations. Regulates more or less directly intracellular calcium concentration and CaMKII phosphorylation, and thereby the density of dendritic spines. Modulates neuronal activity in the circuits underlying innate fear. This Gallus gallus (Chicken) protein is Acid-sensing ion channel 1.